The sequence spans 1029 residues: MGPYCAPHPLSLLVQAAALAAALAQGTLPAFLPCELQPRGKVNCNWLFLKSVPRFSAGAPRANVTSLSLISNRIHHLHDSDFVHLSNLRVLNLKWNCPPAGLSPMHFPCRMTIEPNTFLAVPTLEELNLSYNGITTVPALPSSLVSLSLSRTSILVLGPTHFTGLHALRFLYMDGNCYYKNPCQQAVEVAPGALLGLGNLTHLSLKYNNLTEVPRRLPPSLDTLLLSYNHIITLAPEDLANLTALRVLDVGGNCRRCDHARNPCRECPKNFPKLHPDTFSHLSRLEGLVLKDSSLYKLEKDWFRGLGRLQVLDLSENFLYDYITKTTIFRNLTQLRRLNLSFNYHKKVSFAHLQLAPSFGGLVSLEKLDMHGIFFRSLTNTTLRPLTQLPKLQSLSLQLNFINQAELSIFGAFPSLLFVDLSDNRISGAARPVAALGEVDSGVEVWRWPRGLAPGPLAAVSAKDFMPSCNLNFTLDLSRNNLVTIQQEMFTRLSRLQCLRLSHNSISQAVNGSQFVPLTRLRVLDLSYNKLDLYHGRSFTELPQLEALDLSYNSQPFSMQGVGHNLSFVAQLPSLRYLSLAHNGIHSRVSQKLSSASLRALDFSGNSLSQMWAEGDLYLCFFKGLRNLVQLDLSKNHLHTLLPRHLDNLPKSLRQLRLRDNNLAFFNWSSLTVLPQLEALDLAGNQLKALSNGSLPPGTRLQKLDVSSNSIGFVTPGFFVLANRLKELNLSANALKTVDPFWFGRLTETLKILDVSANPLHCACGAAFVDFLLEMQAAVPGLSRRVTCGSPGQLQGRSIFAQDLRLCLDETLSLDCFGFSLLMVALGLAVPMLHHLCGWDLWYCFHLCLAHLPRRRRQRGEDTLLYDAFVVFDKAQSAVADWVYNELRVQLEERRGRRALRLCLEERDWLPGKTLFENLWASVYSSRKTMFVLDHTDRVSGLLRASFLLAQQRLLEDRKDVVVLVILRPAAYRSRYVRLRQRLCRQSVLLWPHQPSGQGSFWANLGMALTRDNRHFYNRNFCRGPTTAE.

A signal peptide spans 1–24 (MGPYCAPHPLSLLVQAAALAAALA). Residues 25 to 815 (QGTLPAFLPC…LCLDETLSLD (791 aa)) are Extracellular-facing. A disulfide bridge connects residues C34 and C44. 46–50 (WLFLK) serves as a coordination point for DNA. 26 LRR repeats span residues 61–84 (RANV…DFVH), 86–109 (SNLR…HFPC), 121–146 (VPTL…SLVS), 149–165 (LSRT…FTGL), 166–189 (HALR…AVEV), 197–220 (LGNL…LPPS), 222–241 (DTLL…DLAN), 242–267 (LTAL…CREC), 282–305 (LSRL…WFRG), 307–331 (GRLQ…IFRN), 332–355 (LTQL…HLQL), 362–385 (LVSL…TLRP), 389–412 (LPKL…IFGA), 414–439 (PSLL…LGEV), 469–492 (CNLN…MFTR), 494–517 (SRLQ…QFVP), 518–541 (LTRL…SFTE), 543–570 (PQLE…SFVA), 572–596 (LPSL…LSSA), 598–620 (LRAL…LYLC), 625–648 (LRNL…HLDN), 650–673 (PKSL…SLTV), 674–697 (LPQL…SLPP), 699–721 (TRLQ…FFVL), 722–745 (ANRL…WFGR), and 747–770 (TETL…AFVD). The N-linked (GlcNAc...) asparagine glycan is linked to N63. DNA-binding positions include 71 to 76 (SNRIHH) and 94 to 108 (KWNC…MHFP). C97 and C109 are oxidised to a cystine. N128 carries an N-linked (GlcNAc...) asparagine glycan. DNA-binding positions include Y131, R151, and 178 to 180 (YYK). A disulfide bridge links C177 with C183. An N-linked (GlcNAc...) asparagine glycan is attached at N199. Y207 provides a ligand contact to DNA. Residues N209 and N241 are each glycosylated (N-linked (GlcNAc...) asparagine). Intrachain disulfides connect C254-C267 and C257-C264. C257 carries the S-palmitoyl cysteine lipid modification. R261 is a binding site for DNA. C264 carries S-palmitoyl cysteine lipidation. N-linked (GlcNAc...) asparagine glycans are attached at residues N331, N339, and N380. Cysteines 469 and 498 form a disulfide. 2 N-linked (GlcNAc...) asparagine glycosylation sites follow: N472 and N511. Residue N565 is glycosylated (N-linked (GlcNAc...) asparagine). 2 N-linked (GlcNAc...) asparagine glycosylation sites follow: N667 and N692. N-linked (GlcNAc...) asparagine glycosylation is present at N729. 2 cysteine pairs are disulfide-bonded: C762-C788 and C764-C807. The helical transmembrane segment at 816–836 (CFGFSLLMVALGLAVPMLHHL) threads the bilayer. Topologically, residues 837 to 1029 (CGWDLWYCFH…NFCRGPTTAE (193 aa)) are cytoplasmic. The region spanning 864 to 1009 (LLYDAFVVFD…SFWANLGMAL (146 aa)) is the TIR domain.

This sequence belongs to the Toll-like receptor family. In terms of assembly, monomer and homodimer. Exists as a monomer in the absence of unmethylated cytidine-phosphate-guanosine (CpG) ligand. Proteolytic processing of an insertion loop (Z-loop) is required for homodimerization upon binding to the unmethylated CpG ligand leading to its activation. Interacts with MYD88 via their respective TIR domains. Interacts with BTK. Interacts (via transmembrane domain) with UNC93B1. Interacts with CD300LH; the interaction may promote full activation of TLR9-triggered innate responses. Interacts with CNPY3 and HSP90B1; this interaction is required for proper folding in the endoplasmic reticulum. Interacts with SMPDL3B. Interacts with CD82; this interaction is essential for TLR9-dependent myddosome formation in response to CpG stimulation. Post-translationally, activated by proteolytic cleavage of the flexible loop between repeats LRR14 and LRR15 within the ectodomain. Cleavage requires UNC93B1. Proteolytically processed by first removing the majority of the ectodomain by either asparagine endopeptidase (AEP) or a cathepsin followed by a trimming event that is solely cathepsin mediated and required for optimal receptor signaling. Palmitoylated by ZDHHC3 in the Golgi regulates TLR9 trafficking from the Golgi to endosomes. Depalmitoylation by PPT1 controls the release of TLR9 from UNC93B1 in endosomes.

The protein resides in the endoplasmic reticulum membrane. Its subcellular location is the endosome. It is found in the lysosome. It localises to the cytoplasmic vesicle. The protein localises to the phagosome. Its function is as follows. Key component of innate and adaptive immunity. TLRs (Toll-like receptors) control host immune response against pathogens through recognition of molecular patterns specific to microorganisms. TLR9 is a nucleotide-sensing TLR which is activated by unmethylated cytidine-phosphate-guanosine (CpG) dinucleotides. Acts via MYD88 and TRAF6, leading to NF-kappa-B activation, cytokine secretion and the inflammatory response. Upon CpG stimulation, induces B-cell proliferation, activation, survival and antibody production. In Ovis aries (Sheep), this protein is Toll-like receptor 9 (TLR9).